A 652-amino-acid polypeptide reads, in one-letter code: Protein high chlorophyll fluorescent 107 (652 aa).

2 disordered regions span residues 1 to 21 (MHFFFVPNSSSSSPSPANTSS) and 78 to 121 (VFSP…EGKK). Residues 1–68 (MHFFFVPNSS…TFSSKNTYLY (68 aa)) constitute a chloroplast transit peptide. Residues 105 to 121 (PLLENSDKESSEEEGKK) show a composition bias toward basic and acidic residues. TPR repeat units follow at residues 168–201 (LDLSLYKAKVLARNFRYKDAEKILEKCIAYWPED), 202–235 (GRPYVALGKILSKQSKLAEARILYEKGCQSTQGE), 237–270 (SYIWQCWAVLENRLGNVRRARELFDAATVADKKH), 271–304 (VAAWHGWANLEIKQGNISKARNLLAKGLKFCGRN), 305–338 (EYIYQTLALLEAKAGRYEQARYLFKQATICNSRS), 339–372 (CASWLAWAQLEIQQERYPAARKLFEKAVQASPKN), 374–406 (FAWHVWGVFEAGVGNVERGRKLLKIGHALNPRD), 407–440 (PVLLQSLGLLEYKHSSANLARALLRRASELDPRH), 441–474 (QPVWIAWGWMEWKEGNTTTARELYQRALSIDANT), 478–511 (SRCLQAWGVLEQRAGNLSAARRLFRSSLNINSQS), 543–576 (TEVVDDASWVTGFLDIIDPALDTVKRLLNFGQNN), and 598–631 (QQPESSAGREDIETGSGFNLDVFLRSKLSLDPLK). The tract at residues 585-610 (LRNMNRTKDSQSNQQPESSAGREDIE) is disordered.

In terms of assembly, may form homomultimers. Part of a multi-subunit complex in the range of 60-190 and 600-800 kDa in chloroplast membranes.

It is found in the plastid. The protein localises to the chloroplast. The protein resides in the chloroplast membrane. It localises to the chloroplast stroma. Involved, directly or indirectly, in the processing of chloroplast encoded mRNAs. Exhibits sequence-specific RNA binding and RNA remodeling activities, probably leading to the activation of translation of the target gene cluster psbB-psbT-psbH-petB-petD. Blocks 5'-3' and 3'-5' exoribonucleases (e.g. polynucleotide phosphorylase (PNPase), RNase R) in vitro. Necessary for intercistronic RNA processing of the psbH 5' untranslated region or the stabilization of 5' processed psbH RNAs. Also required for the synthesis of psbB. In Arabidopsis thaliana (Mouse-ear cress), this protein is Protein high chlorophyll fluorescent 107.